Reading from the N-terminus, the 1216-residue chain is ATP-dependent DNA helicase Q4 (1216 aa).

Disordered regions lie at residues 72-100 and 113-171; these read EAQEPSCWGPHLSRAATQNTQSMPKQSLL and NLKN…PRLG. Polar residues-rich tracts occupy residues 86–100 and 114–137; these read AATQNTQSMPKQSLL and LKNTTQTGPTQSRKLQLQKRSLST. A phosphoserine mark is found at Ser179 and Ser181. The disordered stretch occupies residues 235–340; sequence SEVSVQSPEA…LHASPRPASL (106 aa). Composition is skewed to polar residues over residues 248-262 and 306-320; these read QPAQVLSQSPKSINS and TQVNVPQPCNSSNQA. The CCHC-type zinc-finger motif lies at 393–410; it reads DTCFRCGQFGHWASQCSQ. The disordered stretch occupies residues 436–458; the sequence is AQRTGTASCHHSGEETQPAAPEL. Residues 506–684 form the Helicase ATP-binding domain; the sequence is IMRILSGIST…AQHLGIAGEF (179 aa). 519-526 is a binding site for ATP; that stretch reads LPTGAGKS. The short motif at 627–630 is the DEAH box element; sequence DEVH. The region spanning 705–872 is the Helicase C-terminal domain; that stretch reads DSDQALVTLL…AVKRLVQRVF (168 aa). The Zn(2+) site is built by Cys875, Cys877, Cys906, and His909.

The protein belongs to the helicase family. RecQ subfamily. In terms of assembly, interacts with UBR1 and UBR2. Interacts with MCM10; this interaction regulates RECQL4 unwinding activity. Interacts with TOPBP1. The cofactor is Zn(2+).

The protein localises to the cytoplasm. It is found in the nucleus. It catalyses the reaction Couples ATP hydrolysis with the unwinding of duplex DNA by translocating in the 3'-5' direction.. The enzyme catalyses ATP + H2O = ADP + phosphate + H(+). Functionally, an ATP-dependent DNA helicase which unwinds dsDNA with a 3'-overhang in a 3'-5' direction. May play a role in development of the palate and the limbs. May modulate chromosome segregation. The polypeptide is ATP-dependent DNA helicase Q4 (Recql4) (Mus musculus (Mouse)).